Consider the following 119-residue polypeptide: Large ribosomal subunit protein bL19 (119 aa).

It belongs to the bacterial ribosomal protein bL19 family.

Its function is as follows. This protein is located at the 30S-50S ribosomal subunit interface and may play a role in the structure and function of the aminoacyl-tRNA binding site. This is Large ribosomal subunit protein bL19 from Idiomarina loihiensis (strain ATCC BAA-735 / DSM 15497 / L2-TR).